A 77-amino-acid chain; its full sequence is MARVCQVTGKAPMSGNNVSHANNKTKRRFLPNLQNRRIWVESENRWVRLRVSNAGLRLIDKNGIDAVLADLRARGEA.

The tract at residues 1–25 (MARVCQVTGKAPMSGNNVSHANNKT) is disordered.

The protein belongs to the bacterial ribosomal protein bL28 family.

The protein is Large ribosomal subunit protein bL28 of Paraburkholderia xenovorans (strain LB400).